A 610-amino-acid chain; its full sequence is tRNA uridine 5-carboxymethylaminomethyl modification enzyme MnmG (610 aa).

An FAD-binding site is contributed by 14–19 (GAGHAG). 274 to 288 (GPRYCPSIEDKIVKF) provides a ligand contact to NAD(+).

It belongs to the MnmG family. In terms of assembly, homodimer. Heterotetramer of two MnmE and two MnmG subunits. FAD serves as cofactor.

Its subcellular location is the cytoplasm. Functionally, NAD-binding protein involved in the addition of a carboxymethylaminomethyl (cmnm) group at the wobble position (U34) of certain tRNAs, forming tRNA-cmnm(5)s(2)U34. The polypeptide is tRNA uridine 5-carboxymethylaminomethyl modification enzyme MnmG (Chlamydia trachomatis serovar A (strain ATCC VR-571B / DSM 19440 / HAR-13)).